The chain runs to 313 residues: Glutathione synthetase (313 aa).

The 185-residue stretch at 125 to 309 (KLFVMDFTEL…IAAKIWDVIE (185 aa)) folds into the ATP-grasp domain. ATP is bound at residue 151 to 207 (RAEHGAVVMKPLHGHGGAAVFRVLPQDINFGSLYDMFAVTFREPWVIQRFLPEVKHG). Residues E280 and N282 each contribute to the Mg(2+) site.

The protein belongs to the prokaryotic GSH synthase family. It depends on Mg(2+) as a cofactor. Requires Mn(2+) as cofactor.

It catalyses the reaction gamma-L-glutamyl-L-cysteine + glycine + ATP = glutathione + ADP + phosphate + H(+). The protein operates within sulfur metabolism; glutathione biosynthesis; glutathione from L-cysteine and L-glutamate: step 2/2. This is Glutathione synthetase from Rhodopseudomonas palustris (strain ATCC BAA-98 / CGA009).